Reading from the N-terminus, the 468-residue chain is Cysteine--tRNA ligase (468 aa).

Residue Cys-33 participates in Zn(2+) binding. The 'HIGH' region motif lies at 35–45; sequence ATVQGLPHIGH. Zn(2+)-binding residues include Cys-211, His-236, and Glu-240. The 'KMSKS' region signature appears at 267 to 271; it reads KMSKS. An ATP-binding site is contributed by Lys-270.

It belongs to the class-I aminoacyl-tRNA synthetase family. As to quaternary structure, monomer. It depends on Zn(2+) as a cofactor.

The protein resides in the cytoplasm. It carries out the reaction tRNA(Cys) + L-cysteine + ATP = L-cysteinyl-tRNA(Cys) + AMP + diphosphate. This Mycobacterium ulcerans (strain Agy99) protein is Cysteine--tRNA ligase.